Consider the following 664-residue polypeptide: Intraflagellar transport protein 70A2 (664 aa).

7 TPR repeats span residues D11–S44, R45–L78, P153–Q186, D188–Q220, Q395–I423, P424–H456, and V458–N491. A coiled-coil region spans residues Y507–D534. The stretch at C543–K576 is one TPR 8 repeat.

The protein belongs to the TTC30/dfy-1/fleer family. In terms of assembly, interacts wit the IFT B complex component IFT52.

Its subcellular location is the cell projection. It localises to the cilium. In terms of biological role, required for polyglutamylation of axonemal tubulin. Plays a role in anterograde intraflagellar transport (IFT), the process by which cilia precursors are transported from the base of the cilium to the site of their incorporation at the tip. In Rattus norvegicus (Rat), this protein is Intraflagellar transport protein 70A2 (Ift70a2).